We begin with the raw amino-acid sequence, 208 residues long: Ribonuclease HII (208 aa).

The RNase H type-2 domain maps to 13–202 (DLVAGVDEVG…VRQAYEAREA (190 aa)). The a divalent metal cation site is built by Asp-19, Glu-20, and Asp-111.

This sequence belongs to the RNase HII family. Requires Mn(2+) as cofactor. It depends on Mg(2+) as a cofactor.

Its subcellular location is the cytoplasm. It carries out the reaction Endonucleolytic cleavage to 5'-phosphomonoester.. Endonuclease that specifically degrades the RNA of RNA-DNA hybrids. The polypeptide is Ribonuclease HII (Pseudomonas fluorescens (strain ATCC BAA-477 / NRRL B-23932 / Pf-5)).